The sequence spans 303 residues: Dehydrodolichyl diphosphate synthase 1 (303 aa).

The helical transmembrane segment at 14–34 threads the bilayer; it reads LLFLFLIPCLFITSYIGFPVF.

It belongs to the UPP synthase family. Requires Mg(2+) as cofactor. In terms of tissue distribution, expressed in low levels in the whole plant. Preferentially expressed in roots.

The protein resides in the endoplasmic reticulum membrane. It catalyses the reaction n isopentenyl diphosphate + (2E,6E)-farnesyl diphosphate = a di-trans,poly-cis-polyprenyl diphosphate + n diphosphate. Its pathway is protein modification; protein glycosylation. Its function is as follows. Catalyzes cis-prenyl chain elongation to produce the polyprenyl backbone of dolichol, a glycosyl carrier-lipid required for the biosynthesis of several classes of glycoprotein. In Arabidopsis thaliana (Mouse-ear cress), this protein is Dehydrodolichyl diphosphate synthase 1 (DPS).